The sequence spans 369 residues: Chorismate synthase (369 aa).

2 residues coordinate NADP(+): R48 and R54. FMN-binding positions include 125–127 (RSS), 238–239 (NA), G278, 293–297 (KPTSS), and R319.

It belongs to the chorismate synthase family. Homotetramer. FMNH2 is required as a cofactor.

It catalyses the reaction 5-O-(1-carboxyvinyl)-3-phosphoshikimate = chorismate + phosphate. Its pathway is metabolic intermediate biosynthesis; chorismate biosynthesis; chorismate from D-erythrose 4-phosphate and phosphoenolpyruvate: step 7/7. In terms of biological role, catalyzes the anti-1,4-elimination of the C-3 phosphate and the C-6 proR hydrogen from 5-enolpyruvylshikimate-3-phosphate (EPSP) to yield chorismate, which is the branch point compound that serves as the starting substrate for the three terminal pathways of aromatic amino acid biosynthesis. This reaction introduces a second double bond into the aromatic ring system. The protein is Chorismate synthase of Burkholderia pseudomallei (strain 1106a).